A 936-amino-acid polypeptide reads, in one-letter code: MTTGFLQKIFGSRNQRLVKQYQKTVAAINALEPQIEQLTDDQLRGKTGEFRQRVASGESLDKLLPEAFAVCREASKRVLKMRHFDVQLIGGMVLHYGKIGEMRTGEGKTLVATLPVYLNALSGRGVHVVTVNDYLAQRDAEWMARLYNFLGLSVGINLSQMDHAAKQEAYAADITYGTNNEFGFDYLRDNMVYETDARVQRALNFAVVDEVDSILIDEARTPLIISGQAEDHTELYVRMNALPPLLERQIGEEKADGTGVEKPGDYTLDEKGRQVFLTESGHEKAERLLSEWGLIGEGESLYAPQNITLMHHVYAALRAHTLFFKDQHYVVQNGEVVIVDEFTGRLMSGRRWSDGLHQAVEAKEHVKIQSENQTLASITFQNYFRMYAKLSGMTGTADTEAYEFNEIYGLETVVIPTNRPPKRIDKQDQIYKTAKERYDAVIRDIRDCYERGQPVLVGTTSIENSELLSHLLKQAGLPHEVLNAKQHAREAEIVAEAGRPKRITIATNMAGRGTDIVLGGNAEKQASFLELDETLPEDEKRRRIQKLHDEWQALHDQVKAAGGLHIIGTERHESRRIDNQLRGRAGRQGDPGSSRFYLSLEDPLLRIFAGDRVRAIMERLKMPEGEAIEAGIVSRSIESAQRKVEARNFDIRKQLLEYDDVSNDQRKVIYQQRNELLEANDITETIGAMRQSVIADIVHQFVPAGSIEEQWDVPELEEVLRNEWQLDLAIQEMINESNSISADEILEAVEAAADEAYEAKVELVGRESFSAFERSIMLQTLDRSWREHLAALDHLRQGIHLRGYAQKNPKQEYKREAFELFAAMLDAVKLEVTRVVMNVQIQSPEQLEQAAEQLEEQGSHLENVEFRHAEFAEAAAAAPVAAEAATAAMIGDAMSHGSSQAAAANMSADNVPKVGRNDPCPCGSGKKYKQCHGKIV.

Residues Gln-87, 105-109, and Asp-515 contribute to the ATP site; that span reads GEGKT. Residues Cys-920, Cys-922, Cys-931, and His-932 each coordinate Zn(2+).

Belongs to the SecA family. In terms of assembly, monomer and homodimer. Part of the essential Sec protein translocation apparatus which comprises SecA, SecYEG and auxiliary proteins SecDF-YajC and YidC. It depends on Zn(2+) as a cofactor.

It is found in the cell inner membrane. The protein resides in the cytoplasm. The catalysed reaction is ATP + H2O + cellular proteinSide 1 = ADP + phosphate + cellular proteinSide 2.. In terms of biological role, part of the Sec protein translocase complex. Interacts with the SecYEG preprotein conducting channel. Has a central role in coupling the hydrolysis of ATP to the transfer of proteins into and across the cell membrane, serving both as a receptor for the preprotein-SecB complex and as an ATP-driven molecular motor driving the stepwise translocation of polypeptide chains across the membrane. This Paraburkholderia xenovorans (strain LB400) protein is Protein translocase subunit SecA.